Consider the following 685-residue polypeptide: Sulfate transporter 4.1, chloroplastic (685 aa).

A chloroplast-targeting transit peptide spans 1–23 (MSYASLSVKDLTSLVSRSGTGSS). Low complexity predominate over residues 15–26 (VSRSGTGSSSSL). Residues 15–53 (VSRSGTGSSSSLKPPGQTRPVKVIPLQHPDTSNEARPPS) form a disordered region. 12 helical membrane-spanning segments follow: residues 97–117 (LDLM…MSYA), 122–142 (LPPI…AIFG), 147–167 (LAIG…GGIA), 175–195 (IELA…MGLL), 203–223 (FISH…IGLS), 255–275 (WPPF…KHVG), 283–303 (FLRA…AKVF), 332–352 (TLLP…VGIA), 369–389 (LFGL…PATG), 406–426 (LSGL…TPMF), 434–454 (LAAI…AIFL), and 473–493 (LFFG…AFVI). Residues 518-642 (QYPEAYTYNG…VRVHDAVQVC (125 aa)) form the STAS domain.

Belongs to the SLC26A/SulP transporter (TC 2.A.53) family. In terms of tissue distribution, expressed both in roots and leaves.

Its subcellular location is the plastid. It is found in the chloroplast membrane. H(+)/sulfate cotransporter that may play a role in the regulation of sulfate assimilation. This Arabidopsis thaliana (Mouse-ear cress) protein is Sulfate transporter 4.1, chloroplastic (SULTR4;1).